The primary structure comprises 179 residues: Transcription factor 21 (179 aa).

The disordered stretch occupies residues 20–86 (CDGIKLDPNK…KQVQRNAANA (67 aa)). Residues 34–46 (SNDSNEESSTCDN) show a composition bias toward polar residues. A compositionally biased stretch (basic residues) spans 50-64 (KKGRGTSGKRRKASS). Positions 70–80 (GTINQEGKQVQ) are enriched in polar residues. Positions 79–131 (VQRNAANARERARMRVLSKAFSRLKTTLPWVPPDTKLSKLDTLRLASSYIAHL) constitute a bHLH domain.

Efficient DNA binding requires dimerization with another bHLH protein. As to expression, at the start of neurulation (stage 13), expressed in the pronephros. At tailbud stage (stage 25-28), expression is high in the anterior-most branchial arch and pronephric glomus. At stage 40, staining persists in the glomus and in the epicardium region of the heart, and at stage 42, expression is higher in the glomus than in the kidney tubule or duct. In adults, expression is highest in the rectum and the spleen, with significant expression in the duodenum, heart, kidney, lungs, pancreas, skin, liver and muscle.

It localises to the nucleus. Its function is as follows. Involved in epithelial-mesenchymal interactions in kidney and lung morphogenesis that include epithelial differentiation and branching morphogenesis. The polypeptide is Transcription factor 21 (tcf21) (Xenopus laevis (African clawed frog)).